A 500-amino-acid chain; its full sequence is MSIIDTRTPEPKRFISGATGDWEVVIGMEVHAQVTSESKLFSGASTAFGAEPNSNVSLVDAAMPGMLPVINLECVRQAVRTGIGLNAQINLKSVFDRKNYFYPDLPQGYQISQFKQPIVGEGKIMISVGPDNKGQFEDVEIGIERLHLEQDAGKSMHDQHPTMSYVDLNRSGVALMEIVSKPDLRSSDEARAYLTKLRTIVRYLGTCDGNMDEGSMRADVNVSVHRPGGEFGTRCEIKNVNSIRFVGQAIEYEARRQIAILEDGGVIDQETRLFDPVKGETRSMRSKEEAHDYRYFPDPDLLPLEFNQAFVDALAAKLPELPDVKKQRLVETLGISVYDASILVTEKAIADYYEAVAEGRDGKAAANWVINDLLGALNKAGKDIEESPISPAQLGAIIDLIKEGTISGKIAKDLFEIVWNEGGDPKKLVEERGMKQVTDTGAIEKAVDDVIAANPDKVEQAKAKPTLAGWFVGQVMKAMGGKANPQAVNELVKSKLGIEE.

It belongs to the GatB/GatE family. GatB subfamily. In terms of assembly, heterotrimer of A, B and C subunits.

It catalyses the reaction L-glutamyl-tRNA(Gln) + L-glutamine + ATP + H2O = L-glutaminyl-tRNA(Gln) + L-glutamate + ADP + phosphate + H(+). The enzyme catalyses L-aspartyl-tRNA(Asn) + L-glutamine + ATP + H2O = L-asparaginyl-tRNA(Asn) + L-glutamate + ADP + phosphate + 2 H(+). Functionally, allows the formation of correctly charged Asn-tRNA(Asn) or Gln-tRNA(Gln) through the transamidation of misacylated Asp-tRNA(Asn) or Glu-tRNA(Gln) in organisms which lack either or both of asparaginyl-tRNA or glutaminyl-tRNA synthetases. The reaction takes place in the presence of glutamine and ATP through an activated phospho-Asp-tRNA(Asn) or phospho-Glu-tRNA(Gln). This is Aspartyl/glutamyl-tRNA(Asn/Gln) amidotransferase subunit B from Brucella ovis (strain ATCC 25840 / 63/290 / NCTC 10512).